Reading from the N-terminus, the 459-residue chain is ATP-dependent protease ATPase subunit HslU (459 aa).

Residues Val18, Gly60 to Glu65, Asp269, Glu337, and Arg409 contribute to the ATP site.

The protein belongs to the ClpX chaperone family. HslU subfamily. A double ring-shaped homohexamer of HslV is capped on each side by a ring-shaped HslU homohexamer. The assembly of the HslU/HslV complex is dependent on binding of ATP.

It localises to the cytoplasm. In terms of biological role, ATPase subunit of a proteasome-like degradation complex; this subunit has chaperone activity. The binding of ATP and its subsequent hydrolysis by HslU are essential for unfolding of protein substrates subsequently hydrolyzed by HslV. HslU recognizes the N-terminal part of its protein substrates and unfolds these before they are guided to HslV for hydrolysis. This is ATP-dependent protease ATPase subunit HslU from Myxococcus xanthus (strain DK1622).